We begin with the raw amino-acid sequence, 133 residues long: Osteocrin (133 aa).

The N-terminal stretch at 1–27 (MLDWRLASAHFILAVTLTLWSSGKVLS) is a signal peptide. Arg132 is modified (arginine amide).

The protein belongs to the Osteocrin family. Interacts with NPR3. In terms of tissue distribution, enriched in neocortical regions of the developing cerebral cortex. Not expressed in other compartments of the neocortical wall or in brain regions such as the hippocampus, striatum, mediodorsal nucleus of the thalamus and cerebellum. Also expressed in bone. In developing neonatal rib bone, present at high level in osteoblasts on bone-forming surfaces, in newly incorporated osteocytes and in some late hypertrophic chondrocytes (at protein level). In adult bone, localizes specifically to osteoblasts and young osteocytes at bone-forming sites (at protein level).

The protein localises to the secreted. In terms of biological role, hormone that acts as a regulator of dendritic growth in the developing cerebral cortex in response to sensory experience. Induced in the brain following membrane depolarization and inhibits dendritic branching in neurons of the developing cortex. Probably acts by binding to natriuretic peptide receptor NPR3/NPR-C, thereby preventing binding between NPR3/NPR-C and natriuretic peptides, leading to increase cGMP production. The sequence is that of Osteocrin from Homo sapiens (Human).